A 540-amino-acid polypeptide reads, in one-letter code: Chaperonin GroEL (540 aa).

ATP contacts are provided by residues 29-32, 86-90, Gly-413, 476-478, and Asp-492; these read TLGP, DGTTT, and NAA.

It belongs to the chaperonin (HSP60) family. In terms of assembly, forms a cylinder of 14 subunits composed of two heptameric rings stacked back-to-back. Interacts with the co-chaperonin GroES.

The protein resides in the cytoplasm. It catalyses the reaction ATP + H2O + a folded polypeptide = ADP + phosphate + an unfolded polypeptide.. Together with its co-chaperonin GroES, plays an essential role in assisting protein folding. The GroEL-GroES system forms a nano-cage that allows encapsulation of the non-native substrate proteins and provides a physical environment optimized to promote and accelerate protein folding. The chain is Chaperonin GroEL from Streptococcus gordonii (strain Challis / ATCC 35105 / BCRC 15272 / CH1 / DL1 / V288).